Reading from the N-terminus, the 71-residue chain is uncharacterized protein (71 aa).

The protein resides in the mitochondrion matrix. It localises to the kinetoplast. This is an uncharacterized protein from Trypanosoma brucei brucei.